Reading from the N-terminus, the 433-residue chain is NADH-ubiquinone oxidoreductase chain 4 (433 aa).

13 helical membrane-spanning segments follow: residues 10 to 30, 45 to 65, 80 to 100, 101 to 121, 132 to 152, 169 to 189, 203 to 223, 234 to 254, 261 to 281, 286 to 306, 331 to 353, 366 to 386, and 410 to 430; these read LFFL…TLFL, FFFF…ISIL, IFNF…MLEN, LLMF…MISG, GFYM…LMLL, MGFI…MFLF, AGSM…LYRF, FSFV…IFCL, SLIA…CVTF, SFGM…LFCL, LSMW…NLFG, LLLS…SMFM, and YLML…NFFM.

It belongs to the complex I subunit 4 family.

The protein resides in the mitochondrion membrane. The enzyme catalyses a ubiquinone + NADH + 5 H(+)(in) = a ubiquinol + NAD(+) + 4 H(+)(out). Core subunit of the mitochondrial membrane respiratory chain NADH dehydrogenase (Complex I) that is believed to belong to the minimal assembly required for catalysis. Complex I functions in the transfer of electrons from NADH to the respiratory chain. The immediate electron acceptor for the enzyme is believed to be ubiquinone. The polypeptide is NADH-ubiquinone oxidoreductase chain 4 (ND4) (Rhipicephalus sanguineus (Brown dog tick)).